A 1102-amino-acid polypeptide reads, in one-letter code: Trafficking protein particle complex II-specific subunit 130 (1102 aa).

This sequence belongs to the TMEM1 family. As to quaternary structure, part of the multisubunit TRAPP (transport protein particle) II complex composed of BET3, BET5, TRS20, TRS23, TRS31, TRS33, TRS65, TRS120 and TRS130. Interacts with YPT31 and YPT32.

Its subcellular location is the golgi apparatus. Functionally, specific subunit of the TRAPP II complex, a highly conserved vesicle tethering complex that functions in the late Golgi as a guanine nucleotide exchange factor (GEF) for the Golgi YPT1 GTPase. TRS130 plays a role in the YPT GEF activity of TRAPP II in concert with the two other TRAPP II-specific subunits TRS65 and TRS120. Required for both the cytoplasm-to-vacuole targeting (Cvt) pathway and starvation-induced autophagy through its role in ATG8 and ATG9 trafficking. This is Trafficking protein particle complex II-specific subunit 130 (TRS130) from Saccharomyces cerevisiae (strain ATCC 204508 / S288c) (Baker's yeast).